The primary structure comprises 445 residues: Fibrinogen gamma chain (445 aa).

The first 25 residues, 1-25 (MNWSLQLRSFILCWALLLLSPTGLA), serve as a signal peptide directing secretion. Asn-78 is a glycosylation site (N-linked (GlcNAc...) asparagine). The region spanning 170–416 (RIHDTTGKDC…ETTMKIIPFN (247 aa)) is the Fibrinogen C-terminal domain. Residues Cys-179 and Cys-208 are joined by a disulfide bond. The Ca(2+) site is built by Asp-344, Asp-346, and Gly-350. Cys-352 and Cys-365 are disulfide-bonded. Positions 400–422 (TRWYSMKETTMKIIPFNRLSIGD) are gamma-chain polymerization, binding amino end of another fibrin alpha chain. Residue Gln-424 forms an Isoglutamyl lysine isopeptide (Gln-Lys) (interchain with K-432) linkage. Positions 424-445 (QQHHMGGSKQVSVEHEVDVEYP) are disordered. A Phosphoserine modification is found at Ser-431. Residue Lys-432 forms an Isoglutamyl lysine isopeptide (Lys-Gln) (interchain with Q-424) linkage. Over residues 435–445 (SVEHEVDVEYP) the composition is skewed to basic and acidic residues.

In terms of assembly, heterohexamer; disulfide linked. Contains 2 sets of 3 non-identical chains (alpha, beta and gamma). The 2 heterotrimers are in head to head conformation with the N-termini in a small central domain. Post-translationally, conversion of fibrinogen to fibrin is triggered by thrombin, which cleaves fibrinopeptides A and B from alpha and beta chains, and thus exposes the N-terminal polymerization sites responsible for the formation of the soft clot. The soft clot is converted into the hard clot by factor XIIIA which catalyzes the epsilon-(gamma-glutamyl)lysine cross-linking between gamma chains (stronger) and between alpha chains (weaker) of different monomers.

The protein localises to the secreted. Together with fibrinogen alpha (FGA) and fibrinogen beta (FGB), polymerizes to form an insoluble fibrin matrix. Has a major function in hemostasis as one of the primary components of blood clots. In addition, functions during the early stages of wound repair to stabilize the lesion and guide cell migration during re-epithelialization. Was originally thought to be essential for platelet aggregation, based on in vitro studies using anticoagulated blood. However, subsequent studies have shown that it is not absolutely required for thrombus formation in vivo. Enhances expression of SELP in activated platelets via an ITGB3-dependent pathway. Maternal fibrinogen is essential for successful pregnancy. Fibrin deposition is also associated with infection, where it protects against IFNG-mediated hemorrhage. May also facilitate the antibacterial immune response via both innate and T-cell mediated pathways. The polypeptide is Fibrinogen gamma chain (Fgg) (Rattus norvegicus (Rat)).